Reading from the N-terminus, the 414-residue chain is Leucine-rich repeat protein 1 (414 aa).

7 LRR repeats span residues 155 to 176, 178 to 199, 201 to 222, 227 to 248, 250 to 271, 273 to 294, and 295 to 316; these read SLEHLQTSYCGLVRVDMRMLCL, SLRKLDLSHNHIKKLPATIGDL, HLQELNLNDNHLESFSVALCHS, SLRSLDLSKNKIKALPVQFCQL, ELKNLKLDDNELIQFPCKIGQL, NLRFLSAARNKLPFLPSEFRNL, and SLEYLDLFGNTFEQPKVLPVIK.

As to quaternary structure, component of the probable ECS(LRR1) E3 ubiquitin-protein ligase complex which contains CUL2, RBX1, Elongin BC complex and LRR1. Interacts with CUL2, RBX1, ELOB and ELOC. In terms of tissue distribution, ubiquitous. Maximal expression was seen in the heart and skeletal muscle and minimal expression seen in the kidney.

The protein localises to the nucleus. The protein operates within protein modification; protein ubiquitination. Functionally, substrate recognition subunit of an ECS (Elongin BC-CUL2/5-SOCS-box protein) E3 ubiquitin-protein ligase complex which mediates the ubiquitination and subsequent proteasomal degradation of target proteins. ECS(LRR1) ubiquitinates MCM7 and promotes CMG replisome disassembly by VCP and chromatin extraction during S-phase. May negatively regulate the 4-1BB-mediated signaling cascades which result in the activation of NK-kappaB and JNK1. In Homo sapiens (Human), this protein is Leucine-rich repeat protein 1.